The sequence spans 498 residues: DNA primase (498 aa).

The segment at 35 to 59 (CPFHPDDTPSFYVSPSKQIFKCFGC) adopts a CHC2-type zinc-finger fold. Positions 243 to 324 (GFAILVEGYF…EVYPVYLPEG (82 aa)) constitute a Toprim domain. The Mg(2+) site is built by Glu-249, Asp-293, and Asp-295.

This sequence belongs to the DnaG primase family. Monomer. Interacts with DnaB. It depends on Zn(2+) as a cofactor. Mg(2+) is required as a cofactor.

The enzyme catalyses ssDNA + n NTP = ssDNA/pppN(pN)n-1 hybrid + (n-1) diphosphate.. Its function is as follows. RNA polymerase that catalyzes the synthesis of short RNA molecules used as primers for DNA polymerase during DNA replication. In Aquifex aeolicus (strain VF5), this protein is DNA primase.